The primary structure comprises 119 residues: UPF0102 protein GFO_3098 (119 aa).

The protein belongs to the UPF0102 family.

The protein is UPF0102 protein GFO_3098 of Christiangramia forsetii (strain DSM 17595 / CGMCC 1.15422 / KT0803) (Gramella forsetii).